Here is a 365-residue protein sequence, read N- to C-terminus: MINTTSRRKIEHLKLCAESPVEARGVSAGFEDVTLIHRALPELNMDELDLTVDFLGKRMQAPFLIASITGGHPDTLPVNAALAAAAEELGVGIGVGSQRAAIDDPAQEDSFRVVRDKAPNAFVYGNVGAAQIRQYGVEGVEKLIEMIDADALAIHLNFLQEAIQPEGDRDATGCLDMIAEICSMVRIPVIAKETGAGISREDALLLHKAGVSAIDVGGVGGTSWAGVEVYRAKESKDPVSERLGELFWDFGIPTVASLIESRVSLPLIATGGVRTGLDIAKSIALGASAASAALPFVGPSLEGKESVVKVLSCMLDEFRAAMFLCGCANIQALHNSPVVVTGWTLKYLEQRGFNVKDYSLPKNAL.

8-9 (RK) contacts substrate. FMN-binding positions include 67–69 (SIT), serine 97, and asparagine 126. 97 to 99 (SQR) provides a ligand contact to substrate. A substrate-binding site is contributed by glutamine 160. Glutamate 161 is a binding site for Mg(2+). FMN-binding positions include lysine 192, threonine 222, 272–274 (GVR), and 293–294 (AL).

The protein belongs to the IPP isomerase type 2 family. As to quaternary structure, homooctamer. Dimer of tetramers. It depends on FMN as a cofactor. NADPH is required as a cofactor. Mg(2+) serves as cofactor.

Its subcellular location is the cytoplasm. The catalysed reaction is isopentenyl diphosphate = dimethylallyl diphosphate. Its function is as follows. Involved in the biosynthesis of isoprenoids. Catalyzes the 1,3-allylic rearrangement of the homoallylic substrate isopentenyl (IPP) to its allylic isomer, dimethylallyl diphosphate (DMAPP). The polypeptide is Isopentenyl-diphosphate delta-isomerase (Methanosarcina acetivorans (strain ATCC 35395 / DSM 2834 / JCM 12185 / C2A)).